We begin with the raw amino-acid sequence, 537 residues long: ATP synthase subunit beta (537 aa).

Residues 1 to 61 (MAKAATSKKE…SSPQKGGKKG (61 aa)) are disordered. Positions 7 to 18 (SKKEASKVEAKK) are enriched in basic and acidic residues. A compositionally biased stretch (polar residues) spans 44–55 (NSPSRTGSSSPQ). Position 209–216 (209–216 (GGAGVGKT)) interacts with ATP.

This sequence belongs to the ATPase alpha/beta chains family. As to quaternary structure, F-type ATPases have 2 components, CF(1) - the catalytic core - and CF(0) - the membrane proton channel. CF(1) has five subunits: alpha(3), beta(3), gamma(1), delta(1), epsilon(1). CF(0) has three main subunits: a(1), b(2) and c(9-12). The alpha and beta chains form an alternating ring which encloses part of the gamma chain. CF(1) is attached to CF(0) by a central stalk formed by the gamma and epsilon chains, while a peripheral stalk is formed by the delta and b chains.

The protein resides in the cell inner membrane. It catalyses the reaction ATP + H2O + 4 H(+)(in) = ADP + phosphate + 5 H(+)(out). In terms of biological role, produces ATP from ADP in the presence of a proton gradient across the membrane. The catalytic sites are hosted primarily by the beta subunits. In Bartonella bacilliformis (strain ATCC 35685 / KC583 / Herrer 020/F12,63), this protein is ATP synthase subunit beta.